The primary structure comprises 247 residues: Eukaryotic translation initiation factor 6 (247 aa).

A phosphoserine; by CK1 mark is found at serine 174 and serine 175.

It belongs to the eIF-6 family. In terms of assembly, monomer. Associates with the 60S ribosomal subunit. In terms of processing, phosphorylation at Ser-174 and Ser-175 promotes nuclear export.

The protein resides in the cytoplasm. Its subcellular location is the nucleus. It is found in the nucleolus. Binds to the 60S ribosomal subunit and prevents its association with the 40S ribosomal subunit to form the 80S initiation complex in the cytoplasm. Is also involved in ribosome biogenesis. Associates with pre-60S subunits in the nucleus and is involved in its nuclear export. The chain is Eukaryotic translation initiation factor 6 (tif6) from Aspergillus oryzae (strain ATCC 42149 / RIB 40) (Yellow koji mold).